The following is a 333-amino-acid chain: UDP-N-acetylglucosamine 4,6-dehydratase (inverting) (333 aa).

Residues Thr19–Phe22, Ser43–Lys48, Asp67–Val68, Ala87, Lys91, and Leu129–Ser130 contribute to the NADP(+) site. Lys91 serves as a coordination point for substrate. Lys133 is an active-site residue. Residues Tyr141 and Lys145 each coordinate NADP(+). Position 173 (Asn173) interacts with substrate. Val174–Arg178 lines the NADP(+) pocket. 4 residues coordinate substrate: Val181, Thr199, Arg258, and Glu261.

It belongs to the polysaccharide synthase family. Homohexamer. The cofactor is NADP(+).

It catalyses the reaction UDP-N-acetyl-alpha-D-glucosamine = UDP-2-acetamido-2,6-dideoxy-beta-L-arabino-hex-4-ulose + H2O. Functionally, catalyzes the first step in the biosynthesis of pseudaminic acid, a sialic-acid-like sugar that is used to modify flagellin. Has both C6 dehydratase and C5 epimerase activities that result in the production of both UDP-2-acetamido-2,6-dideoxy-beta-L-arabino-4-hexulose and UDP-2-acetamido-2,6-dideoxy-alpha-D-xylo-4-hexulose. The polypeptide is UDP-N-acetylglucosamine 4,6-dehydratase (inverting) (pseB) (Helicobacter pylori (strain ATCC 700392 / 26695) (Campylobacter pylori)).